A 364-amino-acid chain; its full sequence is Protein-glutamate methylesterase/protein-glutamine glutaminase 1 (364 aa).

Positions 6-123 (KVLCVDDSAL…RDGMLDYSEK (118 aa)) constitute a Response regulatory domain. Aspartate 57 bears the 4-aspartylphosphate mark. Positions 165–357 (LVSTEKLIIV…RRIMARLASM (193 aa)) constitute a CheB-type methylesterase domain. Residues serine 177, histidine 203, and aspartate 299 contribute to the active site.

It belongs to the CheB family. Phosphorylated by CheA. Phosphorylation of the N-terminal regulatory domain activates the methylesterase activity.

It localises to the cytoplasm. The enzyme catalyses [protein]-L-glutamate 5-O-methyl ester + H2O = L-glutamyl-[protein] + methanol + H(+). It catalyses the reaction L-glutaminyl-[protein] + H2O = L-glutamyl-[protein] + NH4(+). Functionally, involved in chemotaxis. Part of a chemotaxis signal transduction system that modulates chemotaxis in response to various stimuli. Catalyzes the demethylation of specific methylglutamate residues introduced into the chemoreceptors (methyl-accepting chemotaxis proteins or MCP) by CheR. Also mediates the irreversible deamidation of specific glutamine residues to glutamic acid. The polypeptide is Protein-glutamate methylesterase/protein-glutamine glutaminase 1 (Burkholderia mallei (strain ATCC 23344)).